The following is a 424-amino-acid chain: Glutamyl-tRNA reductase (424 aa).

Substrate is bound by residues 49–52 (TCNR), S105, 110–112 (EPQ), and Q116. The active-site Nucleophile is the C50. Residue 185–190 (GSGETA) participates in NADP(+) binding.

It belongs to the glutamyl-tRNA reductase family. In terms of assembly, homodimer.

It carries out the reaction (S)-4-amino-5-oxopentanoate + tRNA(Glu) + NADP(+) = L-glutamyl-tRNA(Glu) + NADPH + H(+). The protein operates within porphyrin-containing compound metabolism; protoporphyrin-IX biosynthesis; 5-aminolevulinate from L-glutamyl-tRNA(Glu): step 1/2. Functionally, catalyzes the NADPH-dependent reduction of glutamyl-tRNA(Glu) to glutamate 1-semialdehyde (GSA). The sequence is that of Glutamyl-tRNA reductase from Legionella pneumophila (strain Corby).